Here is a 701-residue protein sequence, read N- to C-terminus: Polyribonucleotide nucleotidyltransferase (701 aa).

Asp-487 and Asp-493 together coordinate Mg(2+). Positions 554–613 constitute a KH domain; it reads PTMIAMKIDTDKIRDVIGKGGATIRAICEETKASIDIEDDGSIKIFGETKEAADAAKQRI. The region spanning 623 to 691 is the S1 motif domain; sequence GKIYVGKVER…NRGRIKLSIK (69 aa).

Belongs to the polyribonucleotide nucleotidyltransferase family. Component of the RNA degradosome, which is a multiprotein complex involved in RNA processing and mRNA degradation. It depends on Mg(2+) as a cofactor.

It localises to the cytoplasm. It carries out the reaction RNA(n+1) + phosphate = RNA(n) + a ribonucleoside 5'-diphosphate. Involved in mRNA degradation. Catalyzes the phosphorolysis of single-stranded polyribonucleotides processively in the 3'- to 5'-direction. This Pseudomonas putida (strain ATCC 47054 / DSM 6125 / CFBP 8728 / NCIMB 11950 / KT2440) protein is Polyribonucleotide nucleotidyltransferase.